The following is a 413-amino-acid chain: MKGSNTFRWAIAIGVVVAAAAFWFWHSRSESPTAAPGVAAQAPHTAAAGRRGMRDGPLAPVQAATATTQAVPRYLSGLGTVTAANTVTVRSRVDGQLIALHFQEGQQVNAGDLLAQIDPSQFKVALAQAQGQLAKDNATLANARRDLARYQQLAKTNLVSRQELDAQQALVNETQGTIKADEANVASAQLQLDWSRITAPVSGRVGLKQVDVGNQISSSDTAGIVVITQTHPIDLIFTLPESDIATVVQAQKAGKTLVVEAWDRTNSHKLSEGVLLSLDNQIDPTTGTIKIKARFTNQDDTLFPNQFVNARMLVDTEQNAVVVPAAAVQMGNEGHFVWVLNDENNVSKKRVKIGIQDNRNVVISAGLSAGDRVVTDGIDRLTEGAKVEVVEPQTTMADEKSPSRHEGQKGARA.

Positions 1–20 (MKGSNTFRWAIAIGVVVAAA) are cleaved as a signal peptide. Disordered stretches follow at residues 31-57 (SPTA…RDGP) and 391-413 (EPQT…GARA). Positions 397–413 (ADEKSPSRHEGQKGARA) are enriched in basic and acidic residues.

This sequence belongs to the membrane fusion protein (MFP) (TC 8.A.1) family. As to quaternary structure, part of a tripartite efflux system composed of MdtA, MdtB and MdtC.

The protein resides in the cell inner membrane. In Salmonella paratyphi C (strain RKS4594), this protein is Multidrug resistance protein MdtA.